The chain runs to 155 residues: SsrA-binding protein (155 aa).

It belongs to the SmpB family.

Its subcellular location is the cytoplasm. Its function is as follows. Required for rescue of stalled ribosomes mediated by trans-translation. Binds to transfer-messenger RNA (tmRNA), required for stable association of tmRNA with ribosomes. tmRNA and SmpB together mimic tRNA shape, replacing the anticodon stem-loop with SmpB. tmRNA is encoded by the ssrA gene; the 2 termini fold to resemble tRNA(Ala) and it encodes a 'tag peptide', a short internal open reading frame. During trans-translation Ala-aminoacylated tmRNA acts like a tRNA, entering the A-site of stalled ribosomes, displacing the stalled mRNA. The ribosome then switches to translate the ORF on the tmRNA; the nascent peptide is terminated with the 'tag peptide' encoded by the tmRNA and targeted for degradation. The ribosome is freed to recommence translation, which seems to be the essential function of trans-translation. The sequence is that of SsrA-binding protein from Streptococcus agalactiae serotype Ia (strain ATCC 27591 / A909 / CDC SS700).